Here is a 506-residue protein sequence, read N- to C-terminus: 2-isopropylmalate synthase (506 aa).

Residues 4–266 (ILFMDTTLRD…EPSMTLKEIK (263 aa)) form the Pyruvate carboxyltransferase domain. Mn(2+) contacts are provided by Asp13, His201, His203, and Asn237. The tract at residues 390–506 (NITQLQVHFV…KLKSFIQLVK (117 aa)) is regulatory domain.

This sequence belongs to the alpha-IPM synthase/homocitrate synthase family. LeuA type 1 subfamily. In terms of assembly, homodimer. It depends on Mn(2+) as a cofactor.

The protein localises to the cytoplasm. The catalysed reaction is 3-methyl-2-oxobutanoate + acetyl-CoA + H2O = (2S)-2-isopropylmalate + CoA + H(+). Its pathway is amino-acid biosynthesis; L-leucine biosynthesis; L-leucine from 3-methyl-2-oxobutanoate: step 1/4. Catalyzes the condensation of the acetyl group of acetyl-CoA with 3-methyl-2-oxobutanoate (2-ketoisovalerate) to form 3-carboxy-3-hydroxy-4-methylpentanoate (2-isopropylmalate). In Bacillus anthracis (strain A0248), this protein is 2-isopropylmalate synthase.